The sequence spans 484 residues: Hexokinase-1 (484 aa).

The Hexokinase domain maps to 25 to 465 (KTLQDHLDEL…SGVGAALVSA (441 aa)). The interval 79–212 (DGNEHGSYLA…CNNVRLNAIL (134 aa)) is hexokinase small subdomain. 90-95 (DLGGTN) serves as a coordination point for ATP. Residues 160 to 161 (SY), 177 to 178 (TK), and 213 to 214 (SD) each bind substrate. A hexokinase large subdomain region spans residues 213–454 (SDTTGTLVAS…SKVVTIPAED (242 aa)). ATP is bound at residue Thr237. Substrate-binding residues include Asn240, Glu269, and Glu302. ATP contacts are provided by residues 307–308 (GC), 344–348 (TSVLS), and 419–423 (SVYNL).

The protein belongs to the hexokinase family. As to quaternary structure, monomer.

The enzyme catalyses a D-hexose + ATP = a D-hexose 6-phosphate + ADP + H(+). It carries out the reaction D-mannose + ATP = D-mannose 6-phosphate + ADP + H(+). It catalyses the reaction D-fructose + ATP = D-fructose 6-phosphate + ADP + H(+). The catalysed reaction is D-glucose + ATP = D-glucose 6-phosphate + ADP + H(+). Its pathway is carbohydrate metabolism; hexose metabolism. It functions in the pathway carbohydrate degradation; glycolysis; D-glyceraldehyde 3-phosphate and glycerone phosphate from D-glucose: step 1/4. In terms of biological role, catalyzes the phosphorylation of hexose (six-carbon sugars) to hexose 6-phosphate. Phosphorylates D-fructose, D-mannose and, to a lower extent, D-glucose. Compared to hxk2, has low affinity for D-glucose. This chain is Hexokinase-1, found in Schizosaccharomyces pombe (strain 972 / ATCC 24843) (Fission yeast).